Reading from the N-terminus, the 109-residue chain is Guanylin (109 aa).

Positions M1–G21 are cleaved as a signal peptide. Residues V22–D94 constitute a propeptide that is removed on maturation. 3 disulfides stabilise this stretch: C63-C76, C98-C106, and C101-C109.

The protein belongs to the guanylin family.

Its subcellular location is the secreted. In terms of biological role, endogenous activator of intestinal guanylate cyclase. It stimulates this enzyme through the same receptor binding region as the heat-stable enterotoxins. This Sus scrofa (Pig) protein is Guanylin (GUCA2A).